The following is a 255-amino-acid chain: Triosephosphate isomerase (255 aa).

Substrate is bound at residue 9–11; that stretch reads NWK. The active-site Electrophile is histidine 95. Residue glutamate 167 is the Proton acceptor of the active site. Substrate contacts are provided by residues glycine 173, serine 212, and 233 to 234; that span reads GG.

The protein belongs to the triosephosphate isomerase family. Homodimer.

The protein resides in the cytoplasm. It catalyses the reaction D-glyceraldehyde 3-phosphate = dihydroxyacetone phosphate. Its pathway is carbohydrate biosynthesis; gluconeogenesis. It functions in the pathway carbohydrate degradation; glycolysis; D-glyceraldehyde 3-phosphate from glycerone phosphate: step 1/1. Its function is as follows. Involved in the gluconeogenesis. Catalyzes stereospecifically the conversion of dihydroxyacetone phosphate (DHAP) to D-glyceraldehyde-3-phosphate (G3P). In Enterobacter cloacae, this protein is Triosephosphate isomerase.